The chain runs to 503 residues: tRNA-2-methylthio-N(6)-dimethylallyladenosine synthase (503 aa).

An MTTase N-terminal domain is found at 5-121; it reads RSYEIRTFGC…LPVLLERARH (117 aa). Residues C14, C50, C84, C158, C162, and C165 each contribute to the [4Fe-4S] cluster site. Residues 144–380 form the Radical SAM core domain; the sequence is RESAYAGWVS…IALQEEISLA (237 aa). The region spanning 383-453 is the TRAM domain; it reads RELIGTEVEL…PHHLIADAPV (71 aa).

This sequence belongs to the methylthiotransferase family. MiaB subfamily. As to quaternary structure, monomer. [4Fe-4S] cluster serves as cofactor.

It localises to the cytoplasm. It carries out the reaction N(6)-dimethylallyladenosine(37) in tRNA + (sulfur carrier)-SH + AH2 + 2 S-adenosyl-L-methionine = 2-methylsulfanyl-N(6)-dimethylallyladenosine(37) in tRNA + (sulfur carrier)-H + 5'-deoxyadenosine + L-methionine + A + S-adenosyl-L-homocysteine + 2 H(+). Catalyzes the methylthiolation of N6-(dimethylallyl)adenosine (i(6)A), leading to the formation of 2-methylthio-N6-(dimethylallyl)adenosine (ms(2)i(6)A) at position 37 in tRNAs that read codons beginning with uridine. The protein is tRNA-2-methylthio-N(6)-dimethylallyladenosine synthase of Nocardia farcinica (strain IFM 10152).